We begin with the raw amino-acid sequence, 141 residues long: HTH-type transcriptional repressor NsrR (141 aa).

Residues 2-129 (QLTSFTDYGL…DNYTLADLVE (128 aa)) form the HTH rrf2-type domain. Positions 28-51 (ISEVTDVYGVSRNHMVKIINQLSR) form a DNA-binding region, H-T-H motif. [2Fe-2S] cluster is bound by residues Cys-91, Cys-96, and Cys-102.

It depends on [2Fe-2S] cluster as a cofactor.

Its function is as follows. Nitric oxide-sensitive repressor of genes involved in protecting the cell against nitrosative stress. May require iron for activity. This chain is HTH-type transcriptional repressor NsrR, found in Escherichia coli O157:H7 (strain EC4115 / EHEC).